The chain runs to 90 residues: Large ribosomal subunit protein bL31 (90 aa).

The tract at residues 65–90 (YSKQEGSGSKSNKSKSTKSKKGKGKK) is disordered. Over residues 76–90 (NKSKSTKSKKGKGKK) the composition is skewed to basic residues.

Belongs to the bacterial ribosomal protein bL31 family. Type A subfamily. In terms of assembly, part of the 50S ribosomal subunit.

Its function is as follows. Binds the 23S rRNA. The polypeptide is Large ribosomal subunit protein bL31 (Trichodesmium erythraeum (strain IMS101)).